A 308-amino-acid polypeptide reads, in one-letter code: UDP-N-acetylenolpyruvoylglucosamine reductase (308 aa).

The region spanning 30–213 (RVGGAAEWFI…KATTQSHLDH (184 aa)) is the FAD-binding PCMH-type domain. Arginine 176 is an active-site residue. Residue serine 227 is the Proton donor of the active site. Residue glutamate 297 is part of the active site.

It belongs to the MurB family. FAD serves as cofactor.

It is found in the cytoplasm. It carries out the reaction UDP-N-acetyl-alpha-D-muramate + NADP(+) = UDP-N-acetyl-3-O-(1-carboxyvinyl)-alpha-D-glucosamine + NADPH + H(+). Its pathway is cell wall biogenesis; peptidoglycan biosynthesis. In terms of biological role, cell wall formation. This chain is UDP-N-acetylenolpyruvoylglucosamine reductase, found in Acaryochloris marina (strain MBIC 11017).